Reading from the N-terminus, the 228-residue chain is Flagellar L-ring protein (228 aa).

Residues 1–17 (MHYLRYFAIAFLLLLSS) form the signal peptide. Cysteine 18 carries N-palmitoyl cysteine lipidation. Residue cysteine 18 is the site of S-diacylglycerol cysteine attachment.

It belongs to the FlgH family. As to quaternary structure, the basal body constitutes a major portion of the flagellar organelle and consists of four rings (L,P,S, and M) mounted on a central rod.

The protein resides in the cell membrane. Its subcellular location is the bacterial flagellum basal body. Its function is as follows. Assembles around the rod to form the L-ring and probably protects the motor/basal body from shearing forces during rotation. The chain is Flagellar L-ring protein from Wigglesworthia glossinidia brevipalpis.